The chain runs to 500 residues: Trehalose-6-phosphate synthase (500 aa).

R28 is a binding site for D-glucose 6-phosphate. 48-49 (GG) contacts UDP-alpha-D-glucose. The D-glucose 6-phosphate site is built by Y108 and D162. Positions 304 and 309 each coordinate UDP-alpha-D-glucose. R342 lines the D-glucose 6-phosphate pocket. 407–411 (LVAKE) provides a ligand contact to UDP-alpha-D-glucose.

The protein belongs to the glycosyltransferase 20 family. As to quaternary structure, homotetramer.

It carries out the reaction ADP-alpha-D-glucose + D-glucose 6-phosphate = alpha,alpha-trehalose 6-phosphate + ADP + H(+). It catalyses the reaction CDP-alpha-D-glucose + D-glucose 6-phosphate = alpha,alpha-trehalose 6-phosphate + CDP + H(+). The catalysed reaction is GDP-alpha-D-glucose + D-glucose 6-phosphate = alpha,alpha-trehalose 6-phosphate + GDP + H(+). The enzyme catalyses TDP-alpha-D-glucose + D-glucose 6-phosphate = 5-methyl-UDP + alpha,alpha-trehalose 6-phosphate + H(+). It carries out the reaction D-glucose 6-phosphate + UDP-alpha-D-glucose = alpha,alpha-trehalose 6-phosphate + UDP + H(+). The protein operates within glycan biosynthesis; trehalose biosynthesis. In terms of biological role, probably involved in the osmoprotection via the biosynthesis of trehalose and in the production of glycogen and alpha-glucan via the TreS-Pep2 branch involved in the biosynthesis of maltose-1-phosphate (M1P). Catalyzes the transfer of glucose from UDP-glucose (UDP-Glc) to D-glucose 6-phosphate (Glc-6-P) to form trehalose-6-phosphate. Probably also able to use ADP-Glc, CDP-Glc, GDP-Glc and TDP-Glc as glucosyl donors. This is Trehalose-6-phosphate synthase from Mycobacterium bovis (strain ATCC BAA-935 / AF2122/97).